A 473-amino-acid polypeptide reads, in one-letter code: Ribosomal RNA small subunit methyltransferase F (473 aa).

S-adenosyl-L-methionine contacts are provided by residues 123-129, E147, D174, and D192; that span reads AAAPGSK. The active-site Nucleophile is C245.

This sequence belongs to the class I-like SAM-binding methyltransferase superfamily. RsmB/NOP family.

It localises to the cytoplasm. It catalyses the reaction cytidine(1407) in 16S rRNA + S-adenosyl-L-methionine = 5-methylcytidine(1407) in 16S rRNA + S-adenosyl-L-homocysteine + H(+). Its function is as follows. Specifically methylates the cytosine at position 1407 (m5C1407) of 16S rRNA. The protein is Ribosomal RNA small subunit methyltransferase F of Vibrio cholerae serotype O1 (strain ATCC 39315 / El Tor Inaba N16961).